The chain runs to 480 residues: Ribosomal RNA small subunit methyltransferase F (480 aa).

Residues 125–131 (AAAPGSK), E149, D176, and D194 contribute to the S-adenosyl-L-methionine site. C247 (nucleophile) is an active-site residue.

Belongs to the class I-like SAM-binding methyltransferase superfamily. RsmB/NOP family.

Its subcellular location is the cytoplasm. The enzyme catalyses cytidine(1407) in 16S rRNA + S-adenosyl-L-methionine = 5-methylcytidine(1407) in 16S rRNA + S-adenosyl-L-homocysteine + H(+). Functionally, specifically methylates the cytosine at position 1407 (m5C1407) of 16S rRNA. This chain is Ribosomal RNA small subunit methyltransferase F, found in Enterobacter sp. (strain 638).